Reading from the N-terminus, the 662-residue chain is DCC-interacting protein 13-beta (662 aa).

The interval 1 to 428 (MPAVDKLLLE…NSDIEDDNIV (428 aa)) is required for RAB5A binding. Residues 3-268 (AVDKLLLEEA…ESVYTPDIDV (266 aa)) enclose the BAR domain. The 99-residue stretch at 277–375 (LIQKTGYLNL…WICAVNNISR (99 aa)) folds into the PH domain. Positions 486 to 635 (SLLQQMFIVR…LMLSVPLTND (150 aa)) constitute a PID domain. The disordered stretch occupies residues 642-662 (NDQADDTGGSPSENRGAESEA).

As to quaternary structure, homodimer. Homotetramer. Binds RAB5A/Rab5 through an N-terminal domain. This interaction is essential for its recruitment to endosomal membranes as well as its role in cell proliferation. Binds subunits of the NuRD/MeCP1 complex. Interacts with FSHR; interaction is independent of follicle stimulating hormone stimulation. Interacts with APPL1; the interaction is decreased by adiponectin in a time-dependent manner. Forms a complex comprising APPL1, RUVBL2, CTNNB1, HDAC1 and HDAC2; interaction reduces interaction between CTNNB1, HDAC1, HDAC2 and RUVBL2 leading to the decrease of deacetylase activity of this complex; affects the recruitment of repressive complexes to the Wnt target genes. Interacts (via BAR domain) with TBC1D1; interaction is dependent of TBC1D1 phosphorylation at 'Ser-235'; interaction diminishes the phosphorylation of TBC1D1 at 'Thr-596', resulting in inhibition of SLC2A4 translocation and glucose uptake. Interacts with ANXA2; targets APPL2 to endosomes and acting in parallel to RAB5A. Interacts with RAB31 (in GTP-bound form); interaction contributes to or enhances recruitment of APPL2 to the phagosomes; interaction enhances Fc-gamma receptor-mediated phagocytosis through PI3K/Akt signaling in macrophages. Interacts with PIK3R1; forms a complex with PIK3R1 and APPL1. Interacts (via BAR domain) with ADIPOR1; hinders the accessibility of APPL1 to ADIPOR1; negatively regulates adiponectin signaling; ADIPOQ dissociates this interaction and facilitates the recruitment of APPL1 to ADIPOR1. Interacts (via BAR domain) with ADIPOR2; ADIPOQ dissociates this interaction. In terms of tissue distribution, expressed in insulin-target tissues including skeletal muscle, liver, fat, and brain. Highly expressed in kidney and pancreas. Abundantly expressed in the ventromedial hypothalamus (VMH), barely detectable in the arcuate nucleus (ARC) and paraventricular nucleus (PVN) of the hypothalamus. Also expressed in pancreatic beta-cells.

Its subcellular location is the early endosome membrane. It is found in the nucleus. It localises to the cell membrane. The protein localises to the endosome membrane. The protein resides in the cytoplasm. Its subcellular location is the cytoplasmic vesicle. It is found in the phagosome. It localises to the cell projection. The protein localises to the ruffle. The protein resides in the ruffle membrane. Its subcellular location is the phagosome membrane. Functionally, multifunctional adapter protein that binds to various membrane receptors, nuclear factors and signaling proteins to regulate many processes, such as cell proliferation, immune response, endosomal trafficking and cell metabolism. Regulates signaling pathway leading to cell proliferation through interaction with RAB5A and subunits of the NuRD/MeCP1 complex. Plays a role in immune response by modulating phagocytosis, inflammatory and innate immune responses. In macrophages, enhances Fc-gamma receptor-mediated phagocytosis through interaction with RAB31 leading to activation of PI3K/Akt signaling. In response to LPS, modulates inflammatory responses by playing a key role on the regulation of TLR4 signaling and in the nuclear translocation of RELA/NF-kappa-B p65 and the secretion of pro- and anti-inflammatory cytokines. Also functions as a negative regulator of innate immune response via inhibition of AKT1 signaling pathway by forming a complex with APPL1 and PIK3R1. Plays a role in endosomal trafficking of TGFBR1 from the endosomes to the nucleus. Plays a role in cell metabolism by regulating adiponectin and insulin signaling pathways and adaptative thermogenesis. In muscle, negatively regulates adiponectin-simulated glucose uptake and fatty acid oxidation by inhibiting adiponectin signaling pathway through APPL1 sequestration thereby antagonizing APPL1 action. In muscles, negatively regulates insulin-induced plasma membrane recruitment of GLUT4 and glucose uptake through interaction with TBC1D1. Plays a role in cold and diet-induced adaptive thermogenesis by activating ventromedial hypothalamus (VMH) neurons throught AMPK inhibition which enhances sympathetic outflow to subcutaneous white adipose tissue (sWAT), sWAT beiging and cold tolerance. Also plays a role in other signaling pathways namely Wnt/beta-catenin, HGF and glucocorticoid receptor signaling. Positive regulator of beta-catenin/TCF-dependent transcription through direct interaction with RUVBL2/reptin resulting in the relief of RUVBL2-mediated repression of beta-catenin/TCF target genes by modulating the interactions within the beta-catenin-reptin-HDAC complex. May affect adult neurogenesis in hippocampus and olfactory system via regulating the sensitivity of glucocorticoid receptor. Required for fibroblast migration through HGF cell signaling. The polypeptide is DCC-interacting protein 13-beta (Mus musculus (Mouse)).